Reading from the N-terminus, the 465-residue chain is Putative F-box protein At1g21990 (465 aa).

Residues 8–54 enclose the F-box domain; the sequence is RDLISGSPDEILGKILSFLPTHHAATTSVLSKRWRNLLPLVDKLELT.

The protein is Putative F-box protein At1g21990 of Arabidopsis thaliana (Mouse-ear cress).